The primary structure comprises 412 residues: uncharacterized protein (412 aa).

Disordered regions lie at residues 150 to 171, 177 to 196, and 302 to 412; these read NTPG…QLGD, QITS…QQQQ, and QAQQ…PLNP. A compositionally biased stretch (low complexity) spans 156 to 168; it reads QAQQQQQQQQQQQ. Composition is skewed to polar residues over residues 177 to 187 and 310 to 321; these read QITSSNNSGNS and MGSSPTHSSPTI. Residues 335 to 345 are compositionally biased toward low complexity; it reads GGIINTNTNLN. The span at 350–363 shows a compositional bias: polar residues; sequence VSPNQPMPNSSPIL. Composition is skewed to low complexity over residues 364 to 373 and 381 to 394; these read PTNASSVVPP and TSNN…TTSP.

This is an uncharacterized protein from Dictyostelium discoideum (Social amoeba).